We begin with the raw amino-acid sequence, 245 residues long: Gem-associated protein 2 (245 aa).

Belongs to the gemin-2 family. As to quaternary structure, component of the core survival motor neuron (SMN) complex composed of Smn, Gem2, Gem3, rig/Gem5 and one of 3 almost identical Gem4 paralogs encoded by Glos/Gem4a, Gem4b or Gem4c. Part of a minimal SMN complex composed of Smn and Gem2 only; this complex is active in UsnRNP assembly. The SMN complex associates with the entire set of spliceosomal snRNP Sm proteins, SmB, SmD1, SmD2, SmD3, SmE, SmF and SmG, and with the snRNP-specific proteins snRNP-U1-70K, U2A, snf/U1A and U5-116KD. As to expression, expressed in nurse cells and oocytes.

The protein resides in the cytoplasm. The protein localises to the U-body. Functionally, component of the survival motor neuron (SMN) complex that catalyzes the assembly of small nuclear ribonucleoproteins (snRNPs), the building blocks of the spliceosome, and thereby plays an important role in the splicing of cellular pre-mRNAs. Most spliceosomal snRNPs contain a common set of Sm proteins SNRPB, SNRPD1, SNRPD2, SNRPD3, SNRPE, SNRPF and SNRPG that assemble in a heptameric protein ring on the Sm site of the small nuclear RNA to form the core snRNP (Sm core). In the cytosol, the Sm proteins SNRPD1, SNRPD2, SNRPE, SNRPF and SNRPG (5Sm) are trapped in an inactive 6S pICln-Sm complex by the chaperone CLNS1A that controls the assembly of the core snRNP. To assemble core snRNPs, the SMN complex accepts the trapped 5Sm proteins from CLNS1A. Binding of snRNA inside 5Sm ultimately triggers eviction of the SMN complex, thereby allowing binding of SNRPD3 and SNRPB to complete assembly of the core snRNP. Within the SMN complex, GEMIN2 constrains the conformation of 5Sm, thereby promoting 5Sm binding to snRNA containing the snRNP code (a nonameric Sm site and a 3'-adjacent stem-loop), thus preventing progression of assembly until a cognate substrate is bound. Involved in adult motor function. This chain is Gem-associated protein 2, found in Drosophila melanogaster (Fruit fly).